Consider the following 256-residue polypeptide: Thiazole synthase (256 aa).

Lysine 96 (schiff-base intermediate with DXP) is an active-site residue. 1-deoxy-D-xylulose 5-phosphate contacts are provided by residues glycine 157, 183–184, and 205–206; these read AG and NT.

Belongs to the ThiG family. As to quaternary structure, homotetramer. Forms heterodimers with either ThiH or ThiS.

It is found in the cytoplasm. It catalyses the reaction [ThiS sulfur-carrier protein]-C-terminal-Gly-aminoethanethioate + 2-iminoacetate + 1-deoxy-D-xylulose 5-phosphate = [ThiS sulfur-carrier protein]-C-terminal Gly-Gly + 2-[(2R,5Z)-2-carboxy-4-methylthiazol-5(2H)-ylidene]ethyl phosphate + 2 H2O + H(+). It participates in cofactor biosynthesis; thiamine diphosphate biosynthesis. Its function is as follows. Catalyzes the rearrangement of 1-deoxy-D-xylulose 5-phosphate (DXP) to produce the thiazole phosphate moiety of thiamine. Sulfur is provided by the thiocarboxylate moiety of the carrier protein ThiS. In vitro, sulfur can be provided by H(2)S. The polypeptide is Thiazole synthase (Bacillus cytotoxicus (strain DSM 22905 / CIP 110041 / 391-98 / NVH 391-98)).